Reading from the N-terminus, the 620-residue chain is Chaperone protein HscA homolog (620 aa).

This sequence belongs to the heat shock protein 70 family.

Its function is as follows. Chaperone involved in the maturation of iron-sulfur cluster-containing proteins. Has a low intrinsic ATPase activity which is markedly stimulated by HscB. In Pseudomonas putida (strain ATCC 47054 / DSM 6125 / CFBP 8728 / NCIMB 11950 / KT2440), this protein is Chaperone protein HscA homolog.